A 688-amino-acid polypeptide reads, in one-letter code: Glycine--tRNA ligase beta subunit (688 aa).

This sequence belongs to the class-II aminoacyl-tRNA synthetase family. As to quaternary structure, tetramer of two alpha and two beta subunits.

The protein resides in the cytoplasm. It carries out the reaction tRNA(Gly) + glycine + ATP = glycyl-tRNA(Gly) + AMP + diphosphate. The protein is Glycine--tRNA ligase beta subunit of Histophilus somni (strain 129Pt) (Haemophilus somnus).